Here is a 114-residue protein sequence, read N- to C-terminus: Vacuolar morphogenesis protein 10 (114 aa).

The protein resides in the vacuole membrane. Required for vacuolar fusion. Involved in the early steps of the fusion pathway. In Saccharomyces cerevisiae (strain ATCC 204508 / S288c) (Baker's yeast), this protein is Vacuolar morphogenesis protein 10 (VAM10).